A 709-amino-acid chain; its full sequence is Phosphomethylpyrimidine synthase (709 aa).

Residues 1–13 (MNIRSNPDTTLPA) are compositionally biased toward polar residues. Disordered stretches follow at residues 1 to 21 (MNIR…PLPS) and 125 to 168 (DAPA…GREQ). Residues N274, M303, Y332, H368, 388–390 (SRG), 429–432 (DGLR), and E468 contribute to the substrate site. H472 contacts Zn(2+). Y495 serves as a coordination point for substrate. H536 contributes to the Zn(2+) binding site. The [4Fe-4S] cluster site is built by C616, C619, and C624.

This sequence belongs to the ThiC family. In terms of assembly, homodimer. [4Fe-4S] cluster is required as a cofactor.

The catalysed reaction is 5-amino-1-(5-phospho-beta-D-ribosyl)imidazole + S-adenosyl-L-methionine = 4-amino-2-methyl-5-(phosphooxymethyl)pyrimidine + CO + 5'-deoxyadenosine + formate + L-methionine + 3 H(+). The protein operates within cofactor biosynthesis; thiamine diphosphate biosynthesis. Functionally, catalyzes the synthesis of the hydroxymethylpyrimidine phosphate (HMP-P) moiety of thiamine from aminoimidazole ribotide (AIR) in a radical S-adenosyl-L-methionine (SAM)-dependent reaction. This is Phosphomethylpyrimidine synthase from Rhodopseudomonas palustris (strain BisB18).